A 285-amino-acid polypeptide reads, in one-letter code: Urease accessory protein UreD 1 (285 aa).

It belongs to the UreD family. As to quaternary structure, ureD, UreF and UreG form a complex that acts as a GTP-hydrolysis-dependent molecular chaperone, activating the urease apoprotein by helping to assemble the nickel containing metallocenter of UreC. The UreE protein probably delivers the nickel.

The protein resides in the cytoplasm. Required for maturation of urease via the functional incorporation of the urease nickel metallocenter. The protein is Urease accessory protein UreD 1 of Pseudomonas syringae pv. syringae (strain B728a).